The sequence spans 529 residues: Ribonuclease Y (529 aa).

The chain crosses the membrane as a helical span at residues 4 to 24 (GLIYISLEVLVACLITALIMY). Residues 216-297 (LTTRIALPCS…NRIEEVYHRV (82 aa)) enclose the KH domain. The HD domain occupies 342–435 (ALQHSKEVAL…VCAADALSAG (94 aa)).

Belongs to the RNase Y family.

The protein localises to the cell membrane. Its function is as follows. Endoribonuclease that initiates mRNA decay. The polypeptide is Ribonuclease Y (Helicobacter pylori (strain HPAG1)).